The primary structure comprises 100 residues: Small ribosomal subunit protein uS14c (100 aa).

The protein belongs to the universal ribosomal protein uS14 family. As to quaternary structure, part of the 30S ribosomal subunit.

It is found in the plastid. The protein resides in the chloroplast. In terms of biological role, binds 16S rRNA, required for the assembly of 30S particles. The protein is Small ribosomal subunit protein uS14c of Pleurastrum terricola (Filamentous green alga).